Consider the following 251-residue polypeptide: Imidazole glycerol phosphate synthase subunit HisF (251 aa).

Active-site residues include Asp11 and Asp130.

It belongs to the HisA/HisF family. As to quaternary structure, heterodimer of HisH and HisF.

It is found in the cytoplasm. The catalysed reaction is 5-[(5-phospho-1-deoxy-D-ribulos-1-ylimino)methylamino]-1-(5-phospho-beta-D-ribosyl)imidazole-4-carboxamide + L-glutamine = D-erythro-1-(imidazol-4-yl)glycerol 3-phosphate + 5-amino-1-(5-phospho-beta-D-ribosyl)imidazole-4-carboxamide + L-glutamate + H(+). The protein operates within amino-acid biosynthesis; L-histidine biosynthesis; L-histidine from 5-phospho-alpha-D-ribose 1-diphosphate: step 5/9. In terms of biological role, IGPS catalyzes the conversion of PRFAR and glutamine to IGP, AICAR and glutamate. The HisF subunit catalyzes the cyclization activity that produces IGP and AICAR from PRFAR using the ammonia provided by the HisH subunit. This Flavobacterium psychrophilum (strain ATCC 49511 / DSM 21280 / CIP 103535 / JIP02/86) protein is Imidazole glycerol phosphate synthase subunit HisF.